Here is a 362-residue protein sequence, read N- to C-terminus: Putative F-box protein At3g25750 (362 aa).

In terms of domain architecture, F-box spans 4–52 (TEWSDLPEELLDLIANRYSSNIDVLRIRSTCKSWRSAVAMSKERLQFRF).

In Arabidopsis thaliana (Mouse-ear cress), this protein is Putative F-box protein At3g25750.